The primary structure comprises 489 residues: Rhamnulokinase (489 aa).

13–17 (ASSGR) contributes to the ATP binding site. A disulfide bridge connects residues Cys68 and Cys222. Residues Gly83 and 236 to 238 (HDT) contribute to the substrate site. Asp237 (proton acceptor) is an active-site residue. An ATP-binding site is contributed by Thr259. Asn296 is a substrate binding site. Gln304 contacts ATP. Cys353 and Cys370 are disulfide-bonded. Gly402 is a binding site for ATP. Residues Cys413 and Cys417 are joined by a disulfide bond.

It belongs to the rhamnulokinase family. It depends on Mg(2+) as a cofactor.

It catalyses the reaction L-rhamnulose + ATP = L-rhamnulose 1-phosphate + ADP + H(+). The protein operates within carbohydrate degradation; L-rhamnose degradation; glycerone phosphate from L-rhamnose: step 2/3. In terms of biological role, involved in the catabolism of L-rhamnose (6-deoxy-L-mannose). Catalyzes the transfer of the gamma-phosphate group from ATP to the 1-hydroxyl group of L-rhamnulose to yield L-rhamnulose 1-phosphate. This is Rhamnulokinase from Salmonella dublin (strain CT_02021853).